The following is a 328-amino-acid chain: Interleukin-12 subunit beta (328 aa).

Positions Met1–Ala22 are cleaved as a signal peptide. The region spanning Asp29 to Lys106 is the Ig-like C2-type domain. A disulfide bridge connects residues Cys50 and Cys90. 3 N-linked (GlcNAc...) asparagine glycosylation sites follow: Asn125, Asn135, and Asn222. The 92-residue stretch at Pro237–Ser328 folds into the Fibronectin type-III domain.

It belongs to the IL-12B family. In terms of assembly, heterodimer with IL12A; disulfide-linked. The heterodimer is known as interleukin IL-12. Heterodimer with IL23A; disulfide-linked. The heterodimer is known as interleukin IL-23. Also secreted as a monomer. Interacts with NBR1; this interaction promotes IL-12 secretion.

It is found in the secreted. Its function is as follows. Cytokine that can act as a growth factor for activated T and NK cells, enhance the lytic activity of NK/lymphokine-activated killer cells, and stimulate the production of IFN-gamma by resting PBMC. Functionally, associates with IL23A to form the IL-23 interleukin, a heterodimeric cytokine which functions in innate and adaptive immunity. IL-23 may constitute with IL-17 an acute response to infection in peripheral tissues. IL-23 binds to a heterodimeric receptor complex composed of IL12RB1 and IL23R, activates the Jak-Stat signaling cascade, stimulates memory rather than naive T-cells and promotes production of pro-inflammatory cytokines. IL-23 induces autoimmune inflammation and thus may be responsible for autoimmune inflammatory diseases and may be important for tumorigenesis. The polypeptide is Interleukin-12 subunit beta (IL12B) (Macaca mulatta (Rhesus macaque)).